Here is a 225-residue protein sequence, read N- to C-terminus: PKHD-type hydroxylase KPK_3192 (225 aa).

A Fe2OG dioxygenase domain is found at 78-177; it reads TISAPLFNRY…RQASFLWIQS (100 aa). Fe cation-binding residues include His96, Asp98, and His158. Residue Arg168 coordinates 2-oxoglutarate.

Fe(2+) is required as a cofactor. Requires L-ascorbate as cofactor.

In Klebsiella pneumoniae (strain 342), this protein is PKHD-type hydroxylase KPK_3192.